We begin with the raw amino-acid sequence, 1235 residues long: Bromodomain-containing protein 8 (1235 aa).

K85 carries the N6-acetyllysine modification. Residues 97-171 (VRKLTAERVE…ATDAAYQARQ (75 aa)) adopt a coiled-coil conformation. R124 carries the post-translational modification Phosphothreonine. Phosphoserine is present on residues L128 and D144. The interval 186-205 (RSPIDSASPGGDYPLGDLTP) is disordered. The residue at position 264 (A264) is a Phosphothreonine. Residues S268, S284, S383, and S387 each carry the phosphoserine modification. K469 participates in a covalent cross-link: Glycyl lysine isopeptide (Lys-Gly) (interchain with G-Cter in SUMO2). The residue at position 481 (K481) is an N6-acetyllysine; alternate. K481 is covalently cross-linked (Glycyl lysine isopeptide (Lys-Gly) (interchain with G-Cter in SUMO1); alternate). Residue K481 forms a Glycyl lysine isopeptide (Lys-Gly) (interchain with G-Cter in SUMO2); alternate linkage. Residues K509 and K575 each participate in a glycyl lysine isopeptide (Lys-Gly) (interchain with G-Cter in SUMO2) cross-link. The segment at 551–597 (TAAGEIVEADVAIGKGDETPLTNVKTEASPESMLSPSHGSNPIEDPL) is disordered. Phosphoserine is present on S579. K612 participates in a covalent cross-link: Glycyl lysine isopeptide (Lys-Gly) (interchain with G-Cter in SUMO2). Phosphoserine occurs at positions 621, 637, and 641. Residues 621–672 (SQIKDAPGEDEEEDGVSEAASLEEPKEEDQGEGYLSEMDNEPPVSESDDGFS) are disordered. The 106-residue stretch at 706-811 (IQAQKIWKKA…RDVLEQIQQF (106 aa)) folds into the Bromo 1 domain. Disordered stretches follow at residues 827–848 (AKSL…DSVP), 903–940 (ETED…AARK), and 966–999 (ESSE…ETEE). Residues 831–846 (RGRDSTRKQDASEKDS) show a composition bias toward basic and acidic residues. Residues 905 to 915 (EDPEAEELEES) show a composition bias toward acidic residues. Residue L924 is modified to Phosphoserine. The span at 979–999 (QEGREIKASEGERELCRETEE) shows a compositional bias: basic and acidic residues. A Bromo 2 domain is found at 1099–1207 (DDPVQDHLLF…QEVLEQIQVL (109 aa)).

As to quaternary structure, component of the NuA4 histone acetyltransferase complex which contains the catalytic subunit KAT5/TIP60 and the subunits EP400, TRRAP/PAF400, BRD8/SMAP, EPC1, DMAP1/DNMAP1, RUVBL1/TIP49, RUVBL2, ING3, actin, ACTL6A/BAF53A, MORF4L1/MRG15, MORF4L2/MRGX, MRGBP, YEATS4/GAS41, VPS72/YL1 and MEAF6. The NuA4 complex interacts with MYC and the adenovirus E1A protein. Component of a NuA4-related complex which contains EP400, TRRAP/PAF400, SRCAP, BRD8/SMAP, EPC1, DMAP1/DNMAP1, RUVBL1/TIP49, RUVBL2, actin, ACTL6A/BAF53A, VPS72 and YEATS4/GAS41. BRD8 isoform 2 interacts with RXRA/NR2B1 and THRB/ERBA2. Component of a SWR1-like complex. As to expression, expressed in adipose tissue, brain, heart, kidney, liver, lung, pancreas, placenta and skeletal muscle.

It localises to the nucleus. May act as a coactivator during transcriptional activation by hormone-activated nuclear receptors (NR). Isoform 2 stimulates transcriptional activation by AR/DHTR, ESR1/NR3A1, RXRA/NR2B1 and THRB/ERBA2. At least isoform 1 and isoform 2 are components of the NuA4 histone acetyltransferase (HAT) complex which is involved in transcriptional activation of select genes principally by acetylation of nucleosomal histones H4 and H2A. This modification may both alter nucleosome - DNA interactions and promote interaction of the modified histones with other proteins which positively regulate transcription. This complex may be required for the activation of transcriptional programs associated with oncogene and proto-oncogene mediated growth induction, tumor suppressor mediated growth arrest and replicative senescence, apoptosis, and DNA repair. NuA4 may also play a direct role in DNA repair when recruited to sites of DNA damage. Component of a SWR1-like complex that specifically mediates the removal of histone H2A.Z/H2AZ1 from the nucleosome. This is Bromodomain-containing protein 8 (BRD8) from Homo sapiens (Human).